The sequence spans 278 residues: Orotidine 5'-phosphate decarboxylase (278 aa).

The active-site Proton donor is Lys-95.

It belongs to the OMP decarboxylase family. Type 2 subfamily.

It catalyses the reaction orotidine 5'-phosphate + H(+) = UMP + CO2. It participates in pyrimidine metabolism; UMP biosynthesis via de novo pathway; UMP from orotate: step 2/2. This is Orotidine 5'-phosphate decarboxylase from Mycobacterium marinum (strain ATCC BAA-535 / M).